We begin with the raw amino-acid sequence, 1004 residues long: Bifunctional glutamine synthetase adenylyltransferase/adenylyl-removing enzyme (1004 aa).

Positions 1 to 496 (MVRPPSARSA…LHAKLFYRPL (496 aa)) are adenylyl removase. The tract at residues 502 to 1004 (RMDPDALRLS…RAVVERVFGS (503 aa)) is adenylyl transferase.

Belongs to the GlnE family. It depends on Mg(2+) as a cofactor.

The enzyme catalyses [glutamine synthetase]-O(4)-(5'-adenylyl)-L-tyrosine + phosphate = [glutamine synthetase]-L-tyrosine + ADP. It carries out the reaction [glutamine synthetase]-L-tyrosine + ATP = [glutamine synthetase]-O(4)-(5'-adenylyl)-L-tyrosine + diphosphate. In terms of biological role, involved in the regulation of glutamine synthetase GlnA, a key enzyme in the process to assimilate ammonia. When cellular nitrogen levels are high, the C-terminal adenylyl transferase (AT) inactivates GlnA by covalent transfer of an adenylyl group from ATP to specific tyrosine residue of GlnA, thus reducing its activity. Conversely, when nitrogen levels are low, the N-terminal adenylyl removase (AR) activates GlnA by removing the adenylyl group by phosphorolysis, increasing its activity. The regulatory region of GlnE binds the signal transduction protein PII (GlnB) which indicates the nitrogen status of the cell. The protein is Bifunctional glutamine synthetase adenylyltransferase/adenylyl-removing enzyme of Nocardia farcinica (strain IFM 10152).